We begin with the raw amino-acid sequence, 820 residues long: Leucine--tRNA ligase (820 aa).

The 'HIGH' region signature appears at 40-51; that stretch reads PYPSGAGLHVGH. The 'KMSKS' region motif lies at 601 to 605; that stretch reads KMSKS. Residue K604 coordinates ATP.

This sequence belongs to the class-I aminoacyl-tRNA synthetase family.

The protein localises to the cytoplasm. It carries out the reaction tRNA(Leu) + L-leucine + ATP = L-leucyl-tRNA(Leu) + AMP + diphosphate. The polypeptide is Leucine--tRNA ligase (Chlamydia abortus (strain DSM 27085 / S26/3) (Chlamydophila abortus)).